Consider the following 170-residue polypeptide: Protein AIG2 A (170 aa).

15–20 (YGSFQE) contributes to the substrate binding site. Glu-83 acts as the Proton acceptor in catalysis. Residues 147–162 (KNPNGRSREEFEKFVQ) show a composition bias toward basic and acidic residues. A disordered region spans residues 147–170 (KNPNGRSREEFEKFVQDDSSPASA).

The protein belongs to the gamma-glutamylcyclotransferase family. As to expression, ubiquitous.

Its function is as follows. Putative gamma-glutamylcyclotransferase. The polypeptide is Protein AIG2 A (Arabidopsis thaliana (Mouse-ear cress)).